The primary structure comprises 100 residues: Biogenesis of lysosome-related organelles complex 1 subunit CNL1 (100 aa).

Positions 25–46 (SDRVKSLELEATRLVQRQNELV) form a coiled coil.

Belongs to the BLOC1S4 family. As to quaternary structure, component of the biogenesis of lysosome-related organelles complex-1 (BLOC-1).

The protein resides in the cytoplasm. Functionally, component of the biogenesis of lysosome-related organelles complex-1 (BLOC-1), a complex that is involved in endosomal cargo sorting. The chain is Biogenesis of lysosome-related organelles complex 1 subunit CNL1 (CLN1) from Candida glabrata (strain ATCC 2001 / BCRC 20586 / JCM 3761 / NBRC 0622 / NRRL Y-65 / CBS 138) (Yeast).